The chain runs to 224 residues: Ribonuclease HII (224 aa).

An RNase H type-2 domain is found at 1–210 (MKIGGIDEAG…VRKIEESIKA (210 aa)). Positions 7, 8, and 105 each coordinate a divalent metal cation.

The protein belongs to the RNase HII family. It depends on Mn(2+) as a cofactor. Mg(2+) serves as cofactor.

The protein resides in the cytoplasm. It catalyses the reaction Endonucleolytic cleavage to 5'-phosphomonoester.. In terms of biological role, endonuclease that specifically degrades the RNA of RNA-DNA hybrids. This chain is Ribonuclease HII, found in Pyrococcus furiosus (strain ATCC 43587 / DSM 3638 / JCM 8422 / Vc1).